We begin with the raw amino-acid sequence, 246 residues long: Breast cancer metastasis-suppressor 1 (246 aa).

The disordered stretch occupies residues 1–57 (MPVQPPSKDTEEMEAEGDSAAEMNGEEEESEEERSGSQTESEEESSEMDDEDYERRR). Composition is skewed to acidic residues over residues 11–32 (EEME…ESEE) and 40–52 (ESEE…DDED). Residues 51 to 98 (EDYERRRSECVSEMLDLEKQFSELKEKLFRERLSQLRLRLEEVGAERA) are a coiled coil. Residues K184 and K242 each participate in a glycyl lysine isopeptide (Lys-Gly) (interchain with G-Cter in SUMO2) cross-link.

The protein belongs to the BRMS1 family. Homohexamer (Potential). Interacts with SNX6, HDAC1 and RELA. Interacts with ARID4A. Identified in mSin3A corepressor complexes together with SIN3A, SIN3B, RBBP4, RBBP7, SAP30, SUDS3, ARID4A, HDAC1 and HDAC2. Interacts with SPOP; this recruits the protein to a ubiquitin ligase complex containing SPOP and CUL3. Ubiquitinated by a cullin-RING-based BCR (BTB-CUL3-RBX1) E3 ubiquitin-protein ligase complex containing SPOP, leading to proteasomal degradation. In terms of tissue distribution, expression levels are higher in term placentas than in early placentas. Low levels of expression observed in normal pregnancies and in molar pregnancies.

The protein localises to the nucleus. The protein resides in the cytoplasm. In terms of biological role, transcriptional repressor. Down-regulates transcription activation by NF-kappa-B by promoting the deacetylation of RELA at 'Lys-310'. Promotes HDAC1 binding to promoter regions. Down-regulates expression of anti-apoptotic genes that are controlled by NF-kappa-B. Promotes apoptosis in cells that have inadequate adherence to a substrate, a process called anoikis, and may thereby inhibit metastasis. May be a mediator of metastasis suppression in breast carcinoma. This Homo sapiens (Human) protein is Breast cancer metastasis-suppressor 1 (BRMS1).